A 207-amino-acid polypeptide reads, in one-letter code: Nuclear transcription factor Y subunit beta (207 aa).

The interval 1-52 (MTMDGDSSTTDASQLGISADYIGGSHYVIQPHDDTEDSMNDHEDTNGSKESF) is a domain. The tract at residues 27–52 (YVIQPHDDTEDSMNDHEDTNGSKESF) is disordered. The segment covering 39–52 (MNDHEDTNGSKESF) has biased composition (basic and acidic residues). The b domain stretch occupies residues 53-142 (REQDIYLPIA…PLKLYLQKFR (90 aa)). Residues 59–65 (LPIANVA) mediate DNA binding. Residues 86–97 (VQECVSEFISFI) form a subunit association domain (SAD) region. Lys-140 participates in a covalent cross-link: Glycyl lysine isopeptide (Lys-Gly) (interchain with G-Cter in ubiquitin). The segment at 143-207 (EAMKGEKGIG…ISGVQQIQFS (65 aa)) is c domain.

This sequence belongs to the NFYB/HAP3 subunit family. In terms of assembly, heterotrimeric transcription factor composed of three components, NF-YA, NF-YB and NF-YC. NF-YB and NF-YC must interact and dimerize for NF-YA association and DNA binding. Interacts with C1QBP. Post-translationally, monoubiquitination at Lys-140 plays an important role in transcriptional activation by allowing the deposition of histone H3 methylations as well as histone H2B monoubiquitination at 'Lys-121'.

The protein localises to the nucleus. In terms of biological role, component of the sequence-specific heterotrimeric transcription factor (NF-Y) which specifically recognizes a 5'-CCAAT-3' box motif found in the promoters of its target genes. NF-Y can function as both an activator and a repressor, depending on its interacting cofactors. The polypeptide is Nuclear transcription factor Y subunit beta (Nfyb) (Mus musculus (Mouse)).